A 565-amino-acid chain; its full sequence is Adenine deaminase (565 aa).

Belongs to the metallo-dependent hydrolases superfamily. Adenine deaminase family. It depends on Mn(2+) as a cofactor.

It catalyses the reaction adenine + H2O + H(+) = hypoxanthine + NH4(+). This Methylobacterium nodulans (strain LMG 21967 / CNCM I-2342 / ORS 2060) protein is Adenine deaminase.